We begin with the raw amino-acid sequence, 637 residues long: Sec1 family domain-containing protein 1 (637 aa).

3 positions are modified to phosphoserine: serine 32, serine 298, and serine 523.

Belongs to the STXBP/unc-18/SEC1 family. In terms of assembly, interacts with STX17. Interacts with the COG complex via COG4. Interacts with STX5A. As to expression, highly expressed in testis. Detected at lower levels in brain, astrocytes, heart and small intestine.

It localises to the cytoplasm. It is found in the endoplasmic reticulum membrane. The protein localises to the golgi apparatus. Its subcellular location is the golgi stack membrane. In terms of biological role, plays a role in SNARE-pin assembly and Golgi-to-ER retrograde transport via its interaction with COG4. Involved in vesicular transport between the endoplasmic reticulum and the Golgi. The sequence is that of Sec1 family domain-containing protein 1 (Scfd1) from Rattus norvegicus (Rat).